Consider the following 304-residue polypeptide: Cell surface-binding protein OPG105 (304 aa).

An Alpha-carbonic anhydrase domain is found at 1-235; that stretch reads MPQQLSPINI…NDDTQVYYSG (235 aa). The Virion surface segment spans residues 1 to 275; the sequence is MPQQLSPINI…YQKYIEENKT (275 aa). The chain crosses the membrane as a helical span at residues 276–294; it reads FAIIAIVFVFILTAILFFM. Residues 295–304 lie on the Intravirion side of the membrane; the sequence is SRRYSREKQN.

Belongs to the alpha-carbonic anhydrase family. In terms of assembly, homodimer; disulfide-linked. In terms of processing, apparently non-glycosylated.

It localises to the virion membrane. In terms of biological role, binds to chondroitin sulfate on the cell surface to provide virion attachment to target cell. The sequence is that of Cell surface-binding protein OPG105 (OPG105) from Homo sapiens (Human).